The primary structure comprises 957 residues: Collagen alpha-1(XXI) chain (957 aa).

Residues 1–22 (MAHYITFLCMVLVLLLQNSVLA) form the signal peptide. A VWFA domain is found at 37–211 (DLVFILDGSY…KIREVMKQKL (175 aa)). Asn62 carries N-linked (GlcNAc...) asparagine glycosylation. A Laminin G-like domain is found at 230–412 (GFDILLGLDV…VQKLRIYCDP (183 aa)). 3 consecutive Collagen-like domains span residues 448-500 (PGKP…GARG), 501-542 (LPGY…GDKG), and 543-594 (SPGF…SPGA). Disordered regions lie at residues 448–786 (PGKP…KPGR) and 825–938 (GSPG…ICDP). Composition is skewed to low complexity over residues 451–462 (PGLQGPKGDPGL) and 471–481 (QPGQDGKPGYQ). Residues 507–517 (EPGRDGDKGDR) are compositionally biased toward basic and acidic residues. Composition is skewed to low complexity over residues 618–637 (QKGE…PGMP) and 705–729 (EKGI…IQGH). Collagen-like domains lie at 681–733 (SPGE…HGAK), 734–787 (GERG…PGRE), 825–882 (GSPG…GSQG), and 884–934 (GYPG…GPPG). The segment covering 732 to 742 (AKGERGEKGEP) has biased composition (basic and acidic residues). A compositionally biased stretch (pro residues) spans 829 to 838 (IPGPPGPIGP). Residues 839–874 (EGPRGLPGLPGRDGVPGLVGVPGRPGVRGLKGLPGR) are compositionally biased toward low complexity. Pro residues predominate over residues 889–900 (QGPPGPPGPEGP).

Belongs to the fibril-associated collagens with interrupted helices (FACIT) family. As to expression, highly expressed in lymph node, jejunum, pancreas, stomach, trachea, testis, uterus and placenta; moderately expressed in brain, colon, lung, prostate, spinal cord, salivary gland and vascular smooth-muscle cells and very weakly expressed in heart, liver, kidney, bone marrow, spleen, thymus, skeletal muscle, adrenal gland and peripheral leukocytes. Expression in heart was higher in the right ventricle and atrium than in the left ventricle and atrium.

Its subcellular location is the secreted. The protein resides in the extracellular space. It localises to the extracellular matrix. The protein localises to the cytoplasm. The polypeptide is Collagen alpha-1(XXI) chain (COL21A1) (Homo sapiens (Human)).